Here is a 227-residue protein sequence, read N- to C-terminus: Cytochrome c oxidase subunit 2 (227 aa).

Residues 1-14 are Mitochondrial intermembrane-facing; that stretch reads MAYPFQLGLQDATS. A helical transmembrane segment spans residues 15–45; it reads PIMEELMNFHDHTLMIVFLISTLVLYIISLM. Topologically, residues 46-59 are mitochondrial matrix; the sequence is LTTKLTHTSTMDAQ. A helical membrane pass occupies residues 60–87; the sequence is EVETVWTILPAVILIMIALPSLRILYMM. Over 88–227 the chain is Mitochondrial intermembrane; sequence DEINNPVLTV…HFENWSTSMI (140 aa). Positions 161, 196, 198, 200, 204, and 207 each coordinate Cu cation. Glutamate 198 is a binding site for Mg(2+).

This sequence belongs to the cytochrome c oxidase subunit 2 family. As to quaternary structure, component of the cytochrome c oxidase (complex IV, CIV), a multisubunit enzyme composed of 14 subunits. The complex is composed of a catalytic core of 3 subunits MT-CO1, MT-CO2 and MT-CO3, encoded in the mitochondrial DNA, and 11 supernumerary subunits COX4I, COX5A, COX5B, COX6A, COX6B, COX6C, COX7A, COX7B, COX7C, COX8 and NDUFA4, which are encoded in the nuclear genome. The complex exists as a monomer or a dimer and forms supercomplexes (SCs) in the inner mitochondrial membrane with NADH-ubiquinone oxidoreductase (complex I, CI) and ubiquinol-cytochrome c oxidoreductase (cytochrome b-c1 complex, complex III, CIII), resulting in different assemblies (supercomplex SCI(1)III(2)IV(1) and megacomplex MCI(2)III(2)IV(2)). Found in a complex with TMEM177, COA6, COX18, COX20, SCO1 and SCO2. Interacts with TMEM177 in a COX20-dependent manner. Interacts with COX20. Interacts with COX16. It depends on Cu cation as a cofactor.

The protein localises to the mitochondrion inner membrane. It carries out the reaction 4 Fe(II)-[cytochrome c] + O2 + 8 H(+)(in) = 4 Fe(III)-[cytochrome c] + 2 H2O + 4 H(+)(out). Component of the cytochrome c oxidase, the last enzyme in the mitochondrial electron transport chain which drives oxidative phosphorylation. The respiratory chain contains 3 multisubunit complexes succinate dehydrogenase (complex II, CII), ubiquinol-cytochrome c oxidoreductase (cytochrome b-c1 complex, complex III, CIII) and cytochrome c oxidase (complex IV, CIV), that cooperate to transfer electrons derived from NADH and succinate to molecular oxygen, creating an electrochemical gradient over the inner membrane that drives transmembrane transport and the ATP synthase. Cytochrome c oxidase is the component of the respiratory chain that catalyzes the reduction of oxygen to water. Electrons originating from reduced cytochrome c in the intermembrane space (IMS) are transferred via the dinuclear copper A center (CU(A)) of subunit 2 and heme A of subunit 1 to the active site in subunit 1, a binuclear center (BNC) formed by heme A3 and copper B (CU(B)). The BNC reduces molecular oxygen to 2 water molecules using 4 electrons from cytochrome c in the IMS and 4 protons from the mitochondrial matrix. The sequence is that of Cytochrome c oxidase subunit 2 (MT-CO2) from Apodemus semotus (Taiwan field mouse).